Here is a 314-residue protein sequence, read N- to C-terminus: Peroxidase 2 (314 aa).

A signal peptide spans 1–23; the sequence is MASASSVSLMLLVAAAMASAASA. Gln24 is modified (pyrrolidone carboxylic acid). 4 disulfide bridges follow: Cys34-Cys109, Cys67-Cys72, Cys115-Cys310, and Cys194-Cys219. The Proton acceptor role is filled by His65. Positions 66, 69, 71, 73, and 75 each coordinate Ca(2+). Asn148 carries N-linked (GlcNAc...) asparagine glycosylation. A substrate-binding site is contributed by Pro157. N-linked (GlcNAc...) asparagine glycosylation occurs at Asn169. His187 serves as a coordination point for heme b. Residue Thr188 participates in Ca(2+) binding. The N-linked (GlcNAc...) asparagine glycan is linked to Asn203. Ca(2+)-binding residues include Asp234, Thr237, and Asp242. Residues Asn274 and Asn309 are each glycosylated (N-linked (GlcNAc...) asparagine).

The protein belongs to the peroxidase family. Classical plant (class III) peroxidase subfamily. It depends on Ca(2+) as a cofactor. The cofactor is heme b.

Its subcellular location is the secreted. The catalysed reaction is 2 a phenolic donor + H2O2 = 2 a phenolic radical donor + 2 H2O. Removal of H(2)O(2), oxidation of toxic reductants, biosynthesis and degradation of lignin, suberization, auxin catabolism, response to environmental stresses such as wounding, pathogen attack and oxidative stress. These functions might be dependent on each isozyme/isoform in each plant tissue. This is Peroxidase 2 (PRX112) from Oryza sativa subsp. indica (Rice).